We begin with the raw amino-acid sequence, 212 residues long: Adenine phosphoribosyltransferase (212 aa).

Belongs to the purine/pyrimidine phosphoribosyltransferase family. Homodimer.

The protein resides in the cytoplasm. The catalysed reaction is AMP + diphosphate = 5-phospho-alpha-D-ribose 1-diphosphate + adenine. It participates in purine metabolism; AMP biosynthesis via salvage pathway; AMP from adenine: step 1/1. In terms of biological role, catalyzes a salvage reaction resulting in the formation of AMP, that is energically less costly than de novo synthesis. The sequence is that of Adenine phosphoribosyltransferase from Mycobacterium tuberculosis (strain CDC 1551 / Oshkosh).